The primary structure comprises 209 residues: Uracil phosphoribosyltransferase (209 aa).

5-phospho-alpha-D-ribose 1-diphosphate is bound by residues R79, R104, and 131-139 (DPMLATGGS). Uracil is bound by residues I194 and 199–201 (GDA). D200 serves as a coordination point for 5-phospho-alpha-D-ribose 1-diphosphate.

The protein belongs to the UPRTase family. Mg(2+) serves as cofactor.

The enzyme catalyses UMP + diphosphate = 5-phospho-alpha-D-ribose 1-diphosphate + uracil. It participates in pyrimidine metabolism; UMP biosynthesis via salvage pathway; UMP from uracil: step 1/1. With respect to regulation, allosterically activated by GTP. Functionally, catalyzes the conversion of uracil and 5-phospho-alpha-D-ribose 1-diphosphate (PRPP) to UMP and diphosphate. This is Uracil phosphoribosyltransferase from Bacillus velezensis (strain DSM 23117 / BGSC 10A6 / LMG 26770 / FZB42) (Bacillus amyloliquefaciens subsp. plantarum).